A 224-amino-acid chain; its full sequence is Cerebellin-2 (224 aa).

Residues 1-51 form the signal peptide; that stretch reads MPAPGQGPRGPLLSMPGRRGALREPADFGSSLGAVLALLLLLLPACCPVRA. N-linked (GlcNAc...) asparagine glycans are attached at residues Asn-53 and Asn-110. The region spanning 88-224 is the C1q domain; that stretch reads SGSAKVAFSA…TFSGFLVFPL (137 aa).

In terms of assembly, homohexamer; disulfide-linked homotrimers. The trimers are assembled via the globular C1q domains. The trimers associate via N-terminal cysteine residues to form disulfide-linked hexamers. May form homooligomers or heterooligomers with CBLN1 and CBLN3 prior to secretion. Once secreted, does not interact with other CBLN family members. Interacts with GRID2, and more weakly with GRID1. Interacts with NRXN1 and NRXN2 long and short isoforms produced by alternative promoter usage. Weakly interacts with NRXN3 short isoform and not at all with NRXN3 long isoform. In terms of tissue distribution, expressed in various brain regions with higher levels in the olfactory bulb, cerebral cortex, certain thalamic and hypothalamic nuclei, superior and inferior colliculi and some brainstem nuclei. Highly expressed in the dorsal medial habenula.

The protein resides in the secreted. In terms of biological role, acts as a synaptic organizer in specific subsets of neurons in the brain. Essential for long-term maintenance but not establishment of excitatory synapses. Functions as part of a trans-synaptic complex by binding to postsynaptic GRID1 and presynaptic neurexins. This interaction helps regulate the activity of NMDA and AMPA receptors at hippocampal synapses without affecting synapse formation. NRXN1B-CBLN2-GRID1 complex transduce presynaptic signals into postsynaptic NMDAR response. NRXN3B-CBLN2-GRID1 complex transduce presynaptic signals into postsynaptic AMPAR response. This is Cerebellin-2 (Cbln2) from Mus musculus (Mouse).